A 274-amino-acid polypeptide reads, in one-letter code: Large ribosomal subunit protein uL2 (274 aa).

Residues 223-256 (VVMNPVDHPHGGGEGKTGEGRHPVDPWGNLTKGY) form a disordered region. The segment covering 229-246 (DHPHGGGEGKTGEGRHPV) has biased composition (basic and acidic residues).

The protein belongs to the universal ribosomal protein uL2 family. Part of the 50S ribosomal subunit. Forms a bridge to the 30S subunit in the 70S ribosome.

In terms of biological role, one of the primary rRNA binding proteins. Required for association of the 30S and 50S subunits to form the 70S ribosome, for tRNA binding and peptide bond formation. It has been suggested to have peptidyltransferase activity; this is somewhat controversial. Makes several contacts with the 16S rRNA in the 70S ribosome. This is Large ribosomal subunit protein uL2 from Variovorax paradoxus (strain S110).